The following is a 277-amino-acid chain: 4-deoxy-L-threo-5-hexosulose-uronate ketol-isomerase (277 aa).

The Zn(2+) site is built by His-195, His-197, Glu-202, and His-244.

It belongs to the KduI family. Zn(2+) serves as cofactor.

The enzyme catalyses 5-dehydro-4-deoxy-D-glucuronate = 3-deoxy-D-glycero-2,5-hexodiulosonate. It participates in glycan metabolism; pectin degradation; 2-dehydro-3-deoxy-D-gluconate from pectin: step 4/5. Catalyzes the isomerization of 5-dehydro-4-deoxy-D-glucuronate to 3-deoxy-D-glycero-2,5-hexodiulosonate. The polypeptide is 4-deoxy-L-threo-5-hexosulose-uronate ketol-isomerase (Oceanobacillus iheyensis (strain DSM 14371 / CIP 107618 / JCM 11309 / KCTC 3954 / HTE831)).